Reading from the N-terminus, the 348-residue chain is Phosphoribosylformylglycinamidine cyclo-ligase (348 aa).

Belongs to the AIR synthase family.

The protein resides in the cytoplasm. It carries out the reaction 2-formamido-N(1)-(5-O-phospho-beta-D-ribosyl)acetamidine + ATP = 5-amino-1-(5-phospho-beta-D-ribosyl)imidazole + ADP + phosphate + H(+). It participates in purine metabolism; IMP biosynthesis via de novo pathway; 5-amino-1-(5-phospho-D-ribosyl)imidazole from N(2)-formyl-N(1)-(5-phospho-D-ribosyl)glycinamide: step 2/2. The chain is Phosphoribosylformylglycinamidine cyclo-ligase from Cereibacter sphaeroides (strain ATCC 17023 / DSM 158 / JCM 6121 / CCUG 31486 / LMG 2827 / NBRC 12203 / NCIMB 8253 / ATH 2.4.1.) (Rhodobacter sphaeroides).